We begin with the raw amino-acid sequence, 380 residues long: Cytochrome b (380 aa).

4 consecutive transmembrane segments (helical) span residues 34 to 54 (FGSLLGICLMTQIITGLLLAM), 78 to 99 (WLIRNLHANGASFFFICIYLHI), 114 to 134 (WNIGVILPPTLMATAFVGYVL), and 179 to 199 (FFALHFLLLFVTVGLTLVHLT). Residues H84 and H98 each coordinate heme b. Heme b is bound by residues H183 and H197. Residue H202 coordinates a ubiquinone. Helical transmembrane passes span 227–247 (IKDMLGFALMLILLATMALFS), 289–309 (LGGVLALAASVLVLFLVPLLH), 321–341 (LLPFLFWTLVANLLILTWVGS), and 348–368 (FIIIGQVASFTYFTXILVLFP).

It belongs to the cytochrome b family. As to quaternary structure, the cytochrome bc1 complex contains 11 subunits: 3 respiratory subunits (MT-CYB, CYC1 and UQCRFS1), 2 core proteins (UQCRC1 and UQCRC2) and 6 low-molecular weight proteins (UQCRH/QCR6, UQCRB/QCR7, UQCRQ/QCR8, UQCR10/QCR9, UQCR11/QCR10 and a cleavage product of UQCRFS1). This cytochrome bc1 complex then forms a dimer. Requires heme b as cofactor.

It localises to the mitochondrion inner membrane. Component of the ubiquinol-cytochrome c reductase complex (complex III or cytochrome b-c1 complex) that is part of the mitochondrial respiratory chain. The b-c1 complex mediates electron transfer from ubiquinol to cytochrome c. Contributes to the generation of a proton gradient across the mitochondrial membrane that is then used for ATP synthesis. This is Cytochrome b (MT-CYB) from Gymnorhina tibicen (Australian magpie).